Here is a 593-residue protein sequence, read N- to C-terminus: Arginine--tRNA ligase (593 aa).

Positions 138-148 match the 'HIGH' region motif; sequence ANPTGPLHVGH.

This sequence belongs to the class-I aminoacyl-tRNA synthetase family. In terms of assembly, monomer.

It is found in the cytoplasm. The catalysed reaction is tRNA(Arg) + L-arginine + ATP = L-arginyl-tRNA(Arg) + AMP + diphosphate. This chain is Arginine--tRNA ligase, found in Burkholderia lata (strain ATCC 17760 / DSM 23089 / LMG 22485 / NCIMB 9086 / R18194 / 383).